The chain runs to 293 residues: Aquaporin-6 (293 aa).

Residues 1 to 22 (MEPGLCSRAYLLVGGLWTAISK) lie on the Cytoplasmic side of the membrane. The chain crosses the membrane as a helical span at residues 23–43 (ALFAEFLATGLYVFFGVGSVL). Residues 44-51 (PWPVALPS) lie on the Extracellular side of the membrane. Residues 52–70 (VLQIAITFNLATATAVQIS) form a helical membrane-spanning segment. The Cytoplasmic segment spans residues 71 to 75 (WKTSG). An intramembrane region (discontinuously helical) is located at residues 76 to 85 (AHANPAVTLA). The NPA 1 signature appears at 79 to 81 (NPA). At 86–96 (YLVGSHISLPR) the chain is on the cytoplasmic side. A helical transmembrane segment spans residues 97–118 (AMAYIAAQLAGATAGAALLYGV). Residues 119–138 (TPGGIRETLGVNVVHNSTST) are Extracellular-facing. The N-linked (GlcNAc...) asparagine glycan is linked to Asn134. The helical transmembrane segment at 139–159 (GQAVAVELVLTLQLVLCVFAS) threads the bilayer. Residues 160–165 (MDGRQT) lie on the Cytoplasmic side of the membrane. The helical transmembrane segment at 166 to 185 (LASPAAMIGTSVALGHLIGI) threads the bilayer. Topologically, residues 186–189 (YFTG) are extracellular. The discontinuously helical intramembrane region spans 190–202 (CSMNPARSFGPAV). Positions 193-195 (NPA) match the NPA 2 motif. Topologically, residues 203-210 (IVGKFAVH) are extracellular. Residues 211 to 231 (WIFWVGPLTGAVLASLIYNFI) traverse the membrane as a helical segment. Residues 232 to 293 (LFPDTKTVAQ…RSFSFTLGLC (62 aa)) are Cytoplasmic-facing.

It belongs to the MIP/aquaporin (TC 1.A.8) family. In terms of assembly, homotetramer; each monomer provides an independent solute pore.

The protein localises to the cytoplasmic vesicle membrane. The catalysed reaction is nitrate(in) = nitrate(out). It carries out the reaction iodide(out) = iodide(in). The enzyme catalyses bromide(in) = bromide(out). It catalyses the reaction chloride(in) = chloride(out). The catalysed reaction is Na(+)(in) = Na(+)(out). It carries out the reaction H2O(in) = H2O(out). The enzyme catalyses CO2(out) = CO2(in). It catalyses the reaction NH4(+)(in) = NH4(+)(out). Aquaporins form homotetrameric transmembrane channels, with each monomer independently mediating water transport across the plasma membrane along its osmotic gradient. Unlike classical aquaporins, AQP6 is an intracellular channel with selective anion permeability, particularly for nitrate, and exhibits very low water permeability. It may also facilitate the transport of gases, such as CO2 and NH4(+), as demonstrated in vitro. The sequence is that of Aquaporin-6 from Mus musculus (Mouse).